Here is a 367-residue protein sequence, read N- to C-terminus: Chorismate synthase (367 aa).

Residue Arg-48 coordinates NADP(+). FMN-binding positions include 125 to 127 (RAS), Gly-290, 305 to 309 (KPTSS), and Arg-333.

This sequence belongs to the chorismate synthase family. In terms of assembly, homotetramer. FMNH2 is required as a cofactor.

It catalyses the reaction 5-O-(1-carboxyvinyl)-3-phosphoshikimate = chorismate + phosphate. It functions in the pathway metabolic intermediate biosynthesis; chorismate biosynthesis; chorismate from D-erythrose 4-phosphate and phosphoenolpyruvate: step 7/7. Functionally, catalyzes the anti-1,4-elimination of the C-3 phosphate and the C-6 proR hydrogen from 5-enolpyruvylshikimate-3-phosphate (EPSP) to yield chorismate, which is the branch point compound that serves as the starting substrate for the three terminal pathways of aromatic amino acid biosynthesis. This reaction introduces a second double bond into the aromatic ring system. This Protochlamydia amoebophila (strain UWE25) protein is Chorismate synthase.